We begin with the raw amino-acid sequence, 300 residues long: tRNA dimethylallyltransferase 2 (300 aa).

13 to 20 lines the ATP pocket; it reads GPTGVGKT. 15–20 lines the substrate pocket; it reads TGVGKT. An interaction with substrate tRNA region spans residues 38-41; the sequence is DSRQ.

It belongs to the IPP transferase family. As to quaternary structure, monomer. The cofactor is Mg(2+).

It catalyses the reaction adenosine(37) in tRNA + dimethylallyl diphosphate = N(6)-dimethylallyladenosine(37) in tRNA + diphosphate. In terms of biological role, catalyzes the transfer of a dimethylallyl group onto the adenine at position 37 in tRNAs that read codons beginning with uridine, leading to the formation of N6-(dimethylallyl)adenosine (i(6)A). This is tRNA dimethylallyltransferase 2 from Porphyromonas gingivalis (strain ATCC 33277 / DSM 20709 / CIP 103683 / JCM 12257 / NCTC 11834 / 2561).